We begin with the raw amino-acid sequence, 365 residues long: Phospho-N-acetylmuramoyl-pentapeptide-transferase (365 aa).

11 helical membrane-spanning segments follow: residues 15–35, 39–59, 84–104, 114–134, 156–176, 178–198, 209–229, 235–255, 263–283, 291–311, and 343–363; these read WPAA…DRLI, LLSL…WWGV, GTPT…GGLV, LLAI…DDWS, AAVL…TVSL, FNLD…VFLA, LDGL…LQLM, GDPA…GFLI, VFMG…VALL, LLMG…VWVF, and VVVP…LGLH.

It belongs to the glycosyltransferase 4 family. MraY subfamily. The cofactor is Mg(2+).

It localises to the cell inner membrane. It carries out the reaction UDP-N-acetyl-alpha-D-muramoyl-L-alanyl-gamma-D-glutamyl-meso-2,6-diaminopimeloyl-D-alanyl-D-alanine + di-trans,octa-cis-undecaprenyl phosphate = di-trans,octa-cis-undecaprenyl diphospho-N-acetyl-alpha-D-muramoyl-L-alanyl-D-glutamyl-meso-2,6-diaminopimeloyl-D-alanyl-D-alanine + UMP. The protein operates within cell wall biogenesis; peptidoglycan biosynthesis. Catalyzes the initial step of the lipid cycle reactions in the biosynthesis of the cell wall peptidoglycan: transfers peptidoglycan precursor phospho-MurNAc-pentapeptide from UDP-MurNAc-pentapeptide onto the lipid carrier undecaprenyl phosphate, yielding undecaprenyl-pyrophosphoryl-MurNAc-pentapeptide, known as lipid I. The sequence is that of Phospho-N-acetylmuramoyl-pentapeptide-transferase from Synechococcus sp. (strain WH7803).